The following is a 98-amino-acid chain: Large ribosomal subunit protein uL23 (98 aa).

Belongs to the universal ribosomal protein uL23 family. In terms of assembly, part of the 50S ribosomal subunit. Contacts protein L29, and trigger factor when it is bound to the ribosome.

Its function is as follows. One of the early assembly proteins it binds 23S rRNA. One of the proteins that surrounds the polypeptide exit tunnel on the outside of the ribosome. Forms the main docking site for trigger factor binding to the ribosome. This Streptococcus gordonii (strain Challis / ATCC 35105 / BCRC 15272 / CH1 / DL1 / V288) protein is Large ribosomal subunit protein uL23.